The primary structure comprises 687 residues: Ribosomal RNA processing protein 1 homolog (687 aa).

Over residues 288–298 the composition is skewed to acidic residues; it reads DEEDDEVNAEE. 2 disordered regions span residues 288-312 and 463-624; these read DEEDDEVNAEEEQPRATSLDPRAGN and VKEA…GSGK. Composition is skewed to basic and acidic residues over residues 463 to 488, 497 to 520, and 527 to 543; these read VKEAEPKSKKAKKEEPPQQNKDDQTK, PKNDQSKPKIEDQPTLKAEKEEPA, and HSKTKEEQSKPKTDEQP. The segment covering 554-564 has biased composition (low complexity); it reads KAKPTPKTKAA. Residues 596–608 show a composition bias toward polar residues; that stretch reads KQANSKLPQSTPK. Phosphothreonine occurs at positions 617 and 620. A Phosphoserine modification is found at Ser622.

Belongs to the RRP1 family.

Its subcellular location is the nucleus. May be involved in the generation of 28S rRNA. The protein is Ribosomal RNA processing protein 1 homolog (Nnp-1) of Drosophila melanogaster (Fruit fly).